A 213-amino-acid polypeptide reads, in one-letter code: Pyridoxine/pyridoxamine 5'-phosphate oxidase (213 aa).

Residues 8 to 11 and lysine 66 each bind substrate; that span reads RQEY. Residues 61–66, 76–77, arginine 82, lysine 83, and glutamine 105 contribute to the FMN site; these read RTVLLK and YT. Residues tyrosine 123, arginine 127, and serine 131 each coordinate substrate. Residues 140-141 and tryptophan 185 each bind FMN; that span reads QS. 191-193 contributes to the substrate binding site; that stretch reads RLH. Residue arginine 195 coordinates FMN.

The protein belongs to the pyridoxamine 5'-phosphate oxidase family. As to quaternary structure, homodimer. Requires FMN as cofactor.

It carries out the reaction pyridoxamine 5'-phosphate + O2 + H2O = pyridoxal 5'-phosphate + H2O2 + NH4(+). The catalysed reaction is pyridoxine 5'-phosphate + O2 = pyridoxal 5'-phosphate + H2O2. It participates in cofactor metabolism; pyridoxal 5'-phosphate salvage; pyridoxal 5'-phosphate from pyridoxamine 5'-phosphate: step 1/1. Its pathway is cofactor metabolism; pyridoxal 5'-phosphate salvage; pyridoxal 5'-phosphate from pyridoxine 5'-phosphate: step 1/1. In terms of biological role, catalyzes the oxidation of either pyridoxine 5'-phosphate (PNP) or pyridoxamine 5'-phosphate (PMP) into pyridoxal 5'-phosphate (PLP). The protein is Pyridoxine/pyridoxamine 5'-phosphate oxidase of Bacteroides thetaiotaomicron (strain ATCC 29148 / DSM 2079 / JCM 5827 / CCUG 10774 / NCTC 10582 / VPI-5482 / E50).